The chain runs to 300 residues: uncharacterized protein (300 aa).

8 helical membrane passes run 13 to 35, 45 to 67, 80 to 102, 106 to 128, 180 to 202, 217 to 236, 243 to 265, and 275 to 294; these read LLCIFSQCLFGILYLFSIWLQPL, MLTMIFGLLLILFPTIGCRSLLS, WVLFLLGTLDAGSQFWLFMWAPL, GINIAMGYFLFPLIMAVLGWAWL, IPALQGITLDIILISIPCFIYIL, YWLLLPALGIVSAISLSANL, PVSIFAVLSYIEPILLFLIAVFV, and YFTYVPIWLSLIVIGIEGLL.

The protein belongs to the EamA transporter family.

The protein localises to the cell membrane. This is an uncharacterized protein from Haemophilus influenzae (strain ATCC 51907 / DSM 11121 / KW20 / Rd).